The chain runs to 497 residues: Vacuolar-processing enzyme (497 aa).

An N-terminal signal peptide occupies residues 1-31; sequence METHKSLLFFTNYVLFLVFTLSFLPIPGLLA. The active site involves H180. The Nucleophile role is filled by C222. A disulfide bond links C255 and C269. N-linked (GlcNAc...) asparagine glycosylation is found at N320 and N374. Cystine bridges form between C433–C463 and C445–C480.

Belongs to the peptidase C13 family.

In terms of biological role, asparagine-specific endopeptidase involved in the processing of vacuolar seed protein precursors into the mature forms. This Ricinus communis (Castor bean) protein is Vacuolar-processing enzyme.